The following is a 581-amino-acid chain: Caprolactamase subunit beta (581 aa).

Residues Asp41, His99, Asp102, and His124 each coordinate Zn(2+).

Belongs to the HyuB family. As to quaternary structure, the caprolactamase is a heterotetramer composed of two alpha subunits (CapA) and two beta subunits (CapB). It depends on Zn(2+) as a cofactor.

Its activity is regulated as follows. Activity is dependent on the presence of ATP and bicarbonate. The requirement for bicarbonate may be related to allosteric activation through conformational effects, but it is also conceivable that carboxyphosphate is formed and acts as a mediator in caprolactam activation, forming carboxy- or phospholactim. Its function is as follows. Component of a caprolactamase involved in the degradation of caprolactam, an industrial compound mainly used in the production of Nylon 6. Catalyzes the ATP-dependent hydrolysis of the caprolactam ring to form 6-aminocaproic acid (6-ACA). The beta subunit is responsible for hydrolytic lactam ring opening. The enzyme cannot use 5-oxoproline. The sequence is that of Caprolactamase subunit beta from Pseudomonas jessenii.